Consider the following 116-residue polypeptide: Aspartate 1-decarboxylase (116 aa).

The active-site Schiff-base intermediate with substrate; via pyruvic acid is the Ser25. At Ser25 the chain carries Pyruvic acid (Ser). Thr57 is a substrate binding site. Catalysis depends on Tyr58, which acts as the Proton donor. 72-74 provides a ligand contact to substrate; the sequence is GAA.

This sequence belongs to the PanD family. In terms of assembly, heterooctamer of four alpha and four beta subunits. Requires pyruvate as cofactor. Post-translationally, is synthesized initially as an inactive proenzyme, which is activated by self-cleavage at a specific serine bond to produce a beta-subunit with a hydroxyl group at its C-terminus and an alpha-subunit with a pyruvoyl group at its N-terminus.

It localises to the cytoplasm. The catalysed reaction is L-aspartate + H(+) = beta-alanine + CO2. The protein operates within cofactor biosynthesis; (R)-pantothenate biosynthesis; beta-alanine from L-aspartate: step 1/1. Catalyzes the pyruvoyl-dependent decarboxylation of aspartate to produce beta-alanine. In Helicobacter pylori (strain HPAG1), this protein is Aspartate 1-decarboxylase.